The primary structure comprises 399 residues: Chaperone protein DnaJ 1 (399 aa).

The J domain occupies 10–75; that stretch reads DYYKVLGVPK…KKRKEYDEAR (66 aa). Residues 166 to 244 form a CR-type zinc finger; it reads GATVPLRMSS…CKGSGRAKSS (79 aa). The Zn(2+) site is built by Cys-179, Cys-182, Cys-195, Cys-198, Cys-218, Cys-221, Cys-232, and Cys-235. CXXCXGXG motif repeat units follow at residues 179–186, 195–202, 218–225, and 232–239; these read CKACSGTG, CPTCVGTG, CPDCKGRG, and CEVCKGSG.

This sequence belongs to the DnaJ family. As to quaternary structure, homodimer. Zn(2+) serves as cofactor.

It is found in the cytoplasm. In terms of biological role, participates actively in the response to hyperosmotic and heat shock by preventing the aggregation of stress-denatured proteins and by disaggregating proteins, also in an autonomous, DnaK-independent fashion. Unfolded proteins bind initially to DnaJ; upon interaction with the DnaJ-bound protein, DnaK hydrolyzes its bound ATP, resulting in the formation of a stable complex. GrpE releases ADP from DnaK; ATP binding to DnaK triggers the release of the substrate protein, thus completing the reaction cycle. Several rounds of ATP-dependent interactions between DnaJ, DnaK and GrpE are required for fully efficient folding. Also involved, together with DnaK and GrpE, in the DNA replication of plasmids through activation of initiation proteins. The chain is Chaperone protein DnaJ 1 from Streptomyces coelicolor (strain ATCC BAA-471 / A3(2) / M145).